Consider the following 431-residue polypeptide: Enolase (431 aa).

Substrate-binding residues include His-157 and Glu-166. The active-site Proton donor is Glu-209. Residues Asp-244, Glu-293, and Asp-318 each coordinate Mg(2+). Substrate-binding residues include Glu-293 and Asp-318. Lys-343 serves as the catalytic Proton acceptor. Substrate-binding positions include 370-373 (SHRS) and Lys-394.

Belongs to the enolase family. As to quaternary structure, homodimer. The cofactor is Mg(2+).

It is found in the cytoplasm. The enzyme catalyses (2R)-2-phosphoglycerate = phosphoenolpyruvate + H2O. Its pathway is carbohydrate degradation; glycolysis; pyruvate from D-glyceraldehyde 3-phosphate: step 4/5. This chain is Enolase (ENO), found in Fasciola hepatica (Liver fluke).